The chain runs to 260 residues: tRNA pseudouridine synthase C (260 aa).

The active site involves Asp-54.

Belongs to the pseudouridine synthase RluA family.

It carries out the reaction uridine(65) in tRNA = pseudouridine(65) in tRNA. Its function is as follows. Responsible for synthesis of pseudouridine from uracil-65 in transfer RNAs. The protein is tRNA pseudouridine synthase C (truC) of Salmonella typhimurium (strain LT2 / SGSC1412 / ATCC 700720).